The sequence spans 286 residues: NAD kinase (286 aa).

The active-site Proton acceptor is the Asp68. NAD(+) is bound by residues 68 to 69, Lys73, 142 to 143, Arg153, Asp172, 183 to 188, and Gln242; these read DG, ND, and TGYSFS.

This sequence belongs to the NAD kinase family. A divalent metal cation is required as a cofactor.

The protein resides in the cytoplasm. It carries out the reaction NAD(+) + ATP = ADP + NADP(+) + H(+). In terms of biological role, involved in the regulation of the intracellular balance of NAD and NADP, and is a key enzyme in the biosynthesis of NADP. Catalyzes specifically the phosphorylation on 2'-hydroxyl of the adenosine moiety of NAD to yield NADP. The chain is NAD kinase from Natranaerobius thermophilus (strain ATCC BAA-1301 / DSM 18059 / JW/NM-WN-LF).